Consider the following 250-residue polypeptide: Nuclear transcription factor Y subunit C-4 (250 aa).

Positions M1–Q10 are enriched in low complexity. Disordered stretches follow at residues M1–S35 and G209–G250. The span at P214 to N225 shows a compositional bias: polar residues. Over residues A227 to G242 the composition is skewed to gly residues.

Belongs to the NFYC/HAP5 subunit family. In terms of assembly, heterotrimeric transcription factor composed of three components, NF-YA, NF-YB and NF-YC. NF-YB and NF-YC must interact and dimerize for NF-YA association and DNA binding. As to expression, ubiquitous. Present in etiolated seedlings.

The protein localises to the nucleus. Stimulates the transcription of various genes by recognizing and binding to a CCAAT motif in promoters. Involved in the abscisic acid (ABA) signaling pathway. The protein is Nuclear transcription factor Y subunit C-4 (NFYC4) of Arabidopsis thaliana (Mouse-ear cress).